The sequence spans 264 residues: GTP cyclohydrolase FolE2 (264 aa).

Belongs to the GTP cyclohydrolase IV family.

The catalysed reaction is GTP + H2O = 7,8-dihydroneopterin 3'-triphosphate + formate + H(+). Its pathway is cofactor biosynthesis; 7,8-dihydroneopterin triphosphate biosynthesis; 7,8-dihydroneopterin triphosphate from GTP: step 1/1. Functionally, converts GTP to 7,8-dihydroneopterin triphosphate. This is GTP cyclohydrolase FolE2 from Vesicomyosocius okutanii subsp. Calyptogena okutanii (strain HA).